A 226-amino-acid chain; its full sequence is Endonuclease V (226 aa).

Asp-43 and Asp-108 together coordinate Mg(2+).

This sequence belongs to the endonuclease V family. Mg(2+) is required as a cofactor.

The protein resides in the cytoplasm. It catalyses the reaction Endonucleolytic cleavage at apurinic or apyrimidinic sites to products with a 5'-phosphate.. Its function is as follows. DNA repair enzyme involved in the repair of deaminated bases. Selectively cleaves double-stranded DNA at the second phosphodiester bond 3' to a deoxyinosine leaving behind the intact lesion on the nicked DNA. The chain is Endonuclease V from Thermosipho melanesiensis (strain DSM 12029 / CIP 104789 / BI429).